A 354-amino-acid chain; its full sequence is Ion-translocating oxidoreductase complex subunit D (354 aa).

3 consecutive transmembrane segments (helical) span residues 9–28, 67–87, and 117–137; these read IMLH…LYLF, LLSG…WIAV, and VALL…LPLG. Threonine 165 carries the post-translational modification FMN phosphoryl threonine. 5 consecutive transmembrane segments (helical) span residues 200–220, 222–242, 249–269, 277–297, and 301–321; these read GSLG…LLAL, IIHW…AALA, VHGG…ALFI, PISR…VFVI, and GNFP…VPLI.

This sequence belongs to the NqrB/RnfD family. The complex is composed of six subunits: RnfA, RnfB, RnfC, RnfD, RnfE and RnfG. It depends on FMN as a cofactor.

Its subcellular location is the cell inner membrane. Its function is as follows. Part of a membrane-bound complex that couples electron transfer with translocation of ions across the membrane. The chain is Ion-translocating oxidoreductase complex subunit D from Stutzerimonas stutzeri (Pseudomonas stutzeri).